The chain runs to 440 residues: Endoglucanase B (440 aa).

A signal peptide spans 1–33 (MNKRLSRGKISLLASVFVTTTFMGGVNVLASTA). Glu179 (proton donor) is an active-site residue. Catalysis depends on Glu305, which acts as the Nucleophile. The Dockerin domain maps to 381–440 (TSYSLGDVNKDGKVNAIDYAVLKSILLGTNTNVDLSVSDMNKDGKVNALDLAVLKKMLLS).

It belongs to the glycosyl hydrolase 5 (cellulase A) family.

It carries out the reaction Endohydrolysis of (1-&gt;4)-beta-D-glucosidic linkages in cellulose, lichenin and cereal beta-D-glucans.. It catalyses the reaction Endohydrolysis of (1-&gt;4)-beta-D-xylosidic linkages in xylans.. Its function is as follows. Has endoglucanase activity on carboxymethyl-cellulose (CMC), xylan and lichenan, but not Avicel. The chain is Endoglucanase B (engB) from Clostridium cellulovorans (strain ATCC 35296 / DSM 3052 / OCM 3 / 743B).